Reading from the N-terminus, the 20-residue chain is Major extrapallial fluid protein (20 aa).

Positions Asn1–Asp20 are disordered.

In terms of assembly, homodimer. Post-translationally, glycosylated.

Functionally, appears to be a building block of the soluble organic matrix of the shell. The protein binds calcium. The polypeptide is Major extrapallial fluid protein (Mytilus edulis (Blue mussel)).